The sequence spans 961 residues: MPKRAADEPGTSTTDPFHEQSPFDAVLAGTETTDTICEEPPAKRIDLDIKQEFNGGVQSGGLIKNESELTQMTIKQETEGNINEARREEEDEEQDEDSRTSMPPALGEDDDYEEDDADSFIDKTNTPPPSQSFLEGCRAANLPNDIVTGAWETYNHAVQRVSLEGSESAWQLSAIYYYLLSKGIKRRGKTIRILIQPFPVSILTIANSFDISVAEMLDKTARFVEIIHSRKIRRYQEYIRRIQEGLAVSCVIFKKFCRIFCKIFEEIKVGSENCPSSHELFTVLWTSFLVMKSRMTVDDLISNYQLLFSILDQVYTEMCSMKEGIVHHLNQKFVEDLLENDCTIIRALCTQFGGSVLDARHFSDHTFKKMEKTGIPSTWNFQEFRDLIMNVPKTAYENYLLQRGSIDERIFIPSVEDFSKIFQSPDTYSVADILKVSYSGRRFRDAEFLTKISNNHCLEKLALGGKVASEKLVTQSKEQPRVPCVEYNLELGNYPDDLESNNQSLYNRLTKIIGSWKLENSKLEEVCGTMSDSPMATILLKSDEMTNKFERTLSAELGETINENIPKYHYNVRKELELVFLIFMEKIIVAELKKKVREEDLLNVIRREEFLDSVFCFCVELILVSNGYDRPFPWSAELCGVHPFMFHKVIDLMITHEKQLSRQMVQHFSRIEETVIEYFSWKSDSPLWPMVVRCPFAHFQEFGEDWADKLNSYSPIKFTPIKKPDDLRDELGRPIVPQNQTSRTLRIFLKRTYFTAARRLQDLTDRVSMGARAKSQCWSLFDYLLRNDTLIFMDRHLDQILLCCVFVIMKINESSMLFTEIMAQYRRQSANSLLVYRSVTVFQEQLNPENPQAVNTKETILERLEGPQKEKTTVDIIKYYNIEFRDRIKYIIGQIDSASDEDLMEMPVATESGLMPVRVYLTHKLSIQTLPKTKHGESKQERAIANLEKSGITIAMERSGD.

Disordered stretches follow at residues 1 to 43 (MPKR…PPAK) and 55 to 129 (GGVQ…TPPP). The segment covering 68–81 (ELTQMTIKQETEGN) has biased composition (polar residues). A compositionally biased stretch (acidic residues) spans 107 to 119 (GEDDDYEEDDADS). Ser714 bears the Phosphoserine; by CDK4 mark. Residue Thr719 is modified to Phosphothreonine; by CDK4.

It belongs to the retinoblastoma protein (RB) family. In terms of assembly, component of the DRM complex, at least composed of lin-9, lin-35, lin-37, lin-52, lin-53, lin-54, dpl-1 and efl-1. Interacts with lin-53. Interacts (via C-terminus) with dpl-1 (via C-terminus) and efl-1 (via C-terminus). Interacts (via C-terminus) with lin-8. Post-translationally, phosphorylated by the cyclin dependent kinase cdk-4. Phosphorylation inhibits the transcriptional repressor activity of lin-35 and allows for progression through the G1 phase of the cell cycle during postembryonic development.

The protein resides in the nucleus. Functionally, key regulator of cell division which acts as a transcriptional repressor and negatively regulates cell cycle progression in its active unphosphorylated form, but allows cell cycle progression when phosphorylated. When unphosphorylated and in its active form, interacts with E2F transcription factors such as efl-1 to repress their transcriptional activity and negatively regulate the progression through the G1 phase of the cell cycle during postembryonic development. May furthermore act with cell cycle regulator cki-1 to negatively regulate cell cycle progression. Acts redundantly with lin-53, fzr-1 and lin-23 to control cell cycle progression by regulating the expression of G1 phase cyclins. In particular, negatively regulates the expression of the cyclin E homolog cye-1, which is essential for the G1/S phase transition. Regulates cell division in the intestinal lineage, repressing the expression of genes such as cdc-25.2, which are required for intestinal cells to transition from the karyokinesis cell cycle (also known as nuclear division) to endoreplication, a specific growth pathway in the intestinal epithelium required for feeding and gut development in growing larvae during the L1 stage molt. Its role as a transcriptional repressor in the regulation of intestinal cell division during postembryonic development is most likely in complex with an E2F cell cycle regulatory transcription factor efl-1 and its binding partner the synthetic multivulva class B protein dpl-1. Synthetic multivulva (synMuv) class B protein. SynMuv proteins are required to repress the induction of vulval development by Ras signaling and probably act by forming the multiprotein DRM complex that represses transcription. Together with synMuv class B protein lin-53, and redundantly with synMuv class A protein lin-15A, represses transcription to control vulval development, most likely through antagonization of the Ras-signaling pathway in the major hypodermal syncytium hyp7. Acts redundantly with the transcriptional corepressor spr-1 and the zinc finger protein zfp-2 to play a role in vulval morphogenesis, promote germline proliferation and somatic gonad development. Acts redundantly with ubc-18 in the regulation of pharyngeal morphogenesis during embryonic development by negatively regulating the expression of proteins such as sup-35. Functions with the SWI/SNF complex and proteins such as pha-1 to regulate larval development. Functions redundantly with xnp-1 to regulate somatic gonad development. Acts redundantly with slr-2 to regulate the expression of intestinal genes required for nutrient utilization. Regulates transcription in response to starvation. Furthermore, in response to starvation, promotes germ cell programmed cell death by negatively regulating the expression of the anti-apoptotic protein ced-9. Conversely, in conjunction with mcd-1, efl-1 and the synthetic multivulva class B proteins dpl-1, lin-37 and lin-52, may also regulate transcription to promote programmed cell death independently of ced-1, ced-8 and ced-9 cell death pathways. Directly involved in heterochromatin formation by maintaining overall chromatin structure and, in particular, that of constitutive heterochromatin by stabilizing histone methylation. In particular, negatively regulates the expression of mes-4, a histone methyltransferase that controls the expression of germline specific genes. May play a role in double strand break formation during meiosis. May suppress sensitivity to RNAi. May play a role in the response to endoplasmic reticulum (ER) stress. This chain is Retinoblastoma-like protein homolog lin-35, found in Caenorhabditis elegans.